Here is a 199-residue protein sequence, read N- to C-terminus: 5'-deoxynucleotidase YfbR (199 aa).

Residues 18–19 (RW) and His-33 contribute to the substrate site. The region spanning 30 to 142 (VSEHSLQVAM…VKQADALCAY (113 aa)) is the HD domain. Residues His-33, His-68, and Asp-69 each contribute to the a divalent metal cation site. Substrate is bound by residues Asp-69, 77-80 (DLPT), and Asp-137. A divalent metal cation is bound at residue Asp-137.

It belongs to the 5DNU family. Homodimer. It depends on a divalent metal cation as a cofactor.

The protein resides in the cytoplasm. The catalysed reaction is a 2'-deoxyribonucleoside 5'-phosphate + H2O = a 2'-deoxyribonucleoside + phosphate. Catalyzes the strictly specific dephosphorylation of 2'-deoxyribonucleoside 5'-monophosphates. The chain is 5'-deoxynucleotidase YfbR from Salmonella arizonae (strain ATCC BAA-731 / CDC346-86 / RSK2980).